The sequence spans 856 residues: V-type proton ATPase 116 kDa subunit a 2 (856 aa).

Topologically, residues 1-393 (MGSLFRSESM…DAYGVGSYRE (393 aa)) are cytoplasmic. Residues 394 to 412 (VNPALFTIITFPFLFAVMF) traverse the membrane as a helical segment. Over 413–414 (GD) the chain is Vacuolar. A helical transmembrane segment spans residues 415-431 (FGHGFVMFLFALLLVLN). Topologically, residues 432-445 (ENHPRLSQSQEILR) are cytoplasmic. A helical transmembrane segment spans residues 446-475 (MFFDGRYILLLMGLFSVYTGLIYNDCFSKS). The Vacuolar portion of the chain corresponds to 476–549 (VNLFGSGWNV…ATNRLTFLNS (74 aa)). A helical membrane pass occupies residues 550–569 (FKMKMSVILGIFHMTFGVVL). Topologically, residues 570 to 587 (GIFNHLHFRKKFNVYLVS) are cytoplasmic. Residues 588–608 (VPEILFMLCIFGYLIFMIIYK) form a helical membrane-spanning segment. At 609-651 (WLAYSAETSREAPSILIEFINMFLFPTSKTHGLYPGQAHVQRV) the chain is on the vacuolar side. Residues 652–671 (LVALTVLAVPVLFLGKPLFL) form a helical membrane-spanning segment. At 672-739 (LWLHNGRNCF…EILMTQAIHS (68 aa)) the chain is on the cytoplasmic side. 2 positions are modified to phosphoserine: Ser695 and Ser700. The chain crosses the membrane as a helical span at residues 740 to 764 (IEYCLGCISNTASYLRLWALSLAHA). The Vacuolar segment spans residues 765 to 785 (QLSDVLWAMLMRVGLRVDTTY). Residues 786–824 (GVLLLLPVMAFFAVLTIFILLVMEGLSAFLHAIRLHWVE) traverse the membrane as a helical segment. The Cytoplasmic segment spans residues 825 to 856 (FQNKFYVGAGTKFVPFSFSLLSSKFSNDDSIA).

It belongs to the V-ATPase 116 kDa subunit family. V-ATPase is a heteromultimeric enzyme made up of two complexes: the ATP-hydrolytic V1 complex and the proton translocation V0 complex. The V1 complex consists of three catalytic AB heterodimers that form a heterohexamer, three peripheral stalks each consisting of EG heterodimers, one central rotor including subunits D and F, and the regulatory subunits C and H. The proton translocation complex V0 consists of the proton transport subunit a, a ring of proteolipid subunits c9c'', rotary subunit d, subunits e and f, and the accessory subunits ATP6AP1/Ac45 and ATP6AP2/PRR. Directly interacts with PSCD2 through its N-terminal cytosolic tail in an intra-endosomal acidification-dependent manner. Disruption of this interaction results in the inhibition of endocytosis. Interacts with SPAAR. As to expression, relatively high expression in kidney and liver. Lower levels in the spleen, testis, and skeletal muscle. Also expressed in the thymus.

It is found in the cell membrane. The protein localises to the endosome membrane. In terms of biological role, subunit of the V0 complex of vacuolar(H+)-ATPase (V-ATPase), a multisubunit enzyme composed of a peripheral complex (V1) that hydrolyzes ATP and a membrane integral complex (V0) that translocates protons. V-ATPase is responsible for acidifying and maintaining the pH of intracellular compartments and in some cell types, is targeted to the plasma membrane, where it is responsible for acidifying the extracellular environment. Essential component of the endosomal pH-sensing machinery. May play a role in maintaining the Golgi functions, such as glycosylation maturation, by controlling the Golgi pH. In aerobic conditions, involved in intracellular iron homeostasis, thus triggering the activity of Fe(2+) prolyl hydroxylase (PHD) enzymes, and leading to HIF1A hydroxylation and subsequent proteasomal degradation. In Mus musculus (Mouse), this protein is V-type proton ATPase 116 kDa subunit a 2 (Atp6v0a2).